The primary structure comprises 311 residues: Pyrimidine-specific ribonucleoside hydrolase RihA (311 aa).

The active site involves histidine 240.

The protein belongs to the IUNH family. RihA subfamily.

Functionally, hydrolyzes cytidine or uridine to ribose and cytosine or uracil, respectively. This Salmonella choleraesuis (strain SC-B67) protein is Pyrimidine-specific ribonucleoside hydrolase RihA.